The sequence spans 159 residues: Protein HydD (159 aa).

Belongs to the peptidase A31 family.

The sequence is that of Protein HydD (hydD) from Wolinella succinogenes (strain ATCC 29543 / DSM 1740 / CCUG 13145 / JCM 31913 / LMG 7466 / NCTC 11488 / FDC 602W) (Vibrio succinogenes).